A 336-amino-acid chain; its full sequence is MSEPIEKPVEKPGVEPVSDVKDTDPAKKDQPVLVSTTKLTKTQSETLKKLIDELPQILEETGDSSYDEIYGYRINKSGLEHVHDEIRNEIVLKFLIAEEYKFEEARTRLINTFKWRKKFQPLSAAYSETFDKELDDLGVITKYDGTNENLHVVTWNLYGNLKSPKKLFQKFGQDDKAEKEGSPFLRWRIGLMERALSLIDFTDKSNSKIAQVHDYNNVSMFRMDPGMKAATKEIIKIFGDNYPELLSTKFFINVPTIMSWVFTFFRTIGLVSEDTWKKFQVLNSGNLATWFGEKNLPKAYNGSNDSTVESLFASEAKTEAPEYAKIMIHKAALDID.

Basic and acidic residues predominate over residues 1 to 30 (MSEPIEKPVEKPGVEPVSDVKDTDPAKKDQ). A disordered region spans residues 1 to 32 (MSEPIEKPVEKPGVEPVSDVKDTDPAKKDQPV). Residues 144 to 308 (DGTNENLHVV…AYNGSNDSTV (165 aa)) form the CRAL-TRIO domain. Heme-binding residues include tyrosine 158, arginine 188, histidine 213, tyrosine 215, and lysine 249.

Belongs to the SFH5 family. Heme b is required as a cofactor.

It localises to the cytoplasm. The protein localises to the endoplasmic reticulum membrane. Its subcellular location is the microsome membrane. It carries out the reaction a 1,2-diacyl-sn-glycero-3-phospho-(1D-myo-inositol)(in) = a 1,2-diacyl-sn-glycero-3-phospho-(1D-myo-inositol)(out). Non-classical phosphatidylinositol (PtdIns) transfer protein (PITP), which exhibits PtdIns-binding/transfer activity in the absence of detectable PtdCho-binding/transfer activity. Regulates PtdIns(4,5)P2 homeostasis at the plasma membrane. Heme-binding protein that may play a role in organic oxidant-induced stress responses. This is Phosphatidylinositol transfer protein SFH5 (SFH5) from Meyerozyma guilliermondii (strain ATCC 6260 / CBS 566 / DSM 6381 / JCM 1539 / NBRC 10279 / NRRL Y-324) (Yeast).